Consider the following 155-residue polypeptide: 6,7-dimethyl-8-ribityllumazine synthase (155 aa).

5-amino-6-(D-ribitylamino)uracil is bound by residues W22, 56-58, and 80-82; these read SYE and AVI. (2S)-2-hydroxy-3-oxobutyl phosphate is bound at residue 85-86; it reads DT. Residue H88 is the Proton donor of the active site. F113 lines the 5-amino-6-(D-ribitylamino)uracil pocket. (2S)-2-hydroxy-3-oxobutyl phosphate is bound at residue R127.

Belongs to the DMRL synthase family.

It carries out the reaction (2S)-2-hydroxy-3-oxobutyl phosphate + 5-amino-6-(D-ribitylamino)uracil = 6,7-dimethyl-8-(1-D-ribityl)lumazine + phosphate + 2 H2O + H(+). It participates in cofactor biosynthesis; riboflavin biosynthesis; riboflavin from 2-hydroxy-3-oxobutyl phosphate and 5-amino-6-(D-ribitylamino)uracil: step 1/2. Catalyzes the formation of 6,7-dimethyl-8-ribityllumazine by condensation of 5-amino-6-(D-ribitylamino)uracil with 3,4-dihydroxy-2-butanone 4-phosphate. This is the penultimate step in the biosynthesis of riboflavin. The protein is 6,7-dimethyl-8-ribityllumazine synthase of Deinococcus radiodurans (strain ATCC 13939 / DSM 20539 / JCM 16871 / CCUG 27074 / LMG 4051 / NBRC 15346 / NCIMB 9279 / VKM B-1422 / R1).